A 541-amino-acid polypeptide reads, in one-letter code: Calcium-dependent protein kinase 9 (541 aa).

The tract at residues 1–75 (MGNCFAKNHG…PGLSPKTTTK (75 aa)) is disordered. A lipid anchor (N-myristoyl glycine) is attached at Gly2. A compositionally biased stretch (polar residues) spans 14–54 (PQQNGNTTRSVEVGVTNQDPPSYTPQARTTQQPEKPGSVNS). Phosphoserine is present on Ser69. Residues 91-349 (YTLGKELGRG…AADVLQHPWL (259 aa)) form the Protein kinase domain. ATP-binding positions include 97–105 (LGRGQFGVT) and Lys120. Asp215 functions as the Proton acceptor in the catalytic mechanism. Position 255 is a phosphoserine (Ser255). The tract at residues 355–385 (ASDKPIDSAVLSRMKQFRAMNKLKKLALKVI) is autoinhibitory domain. EF-hand domains are found at residues 392 to 427 (EEIQ…LGSK), 428 to 463 (LTEA…RHRL), 464 to 499 (ESNE…YGMG), and 500 to 534 (DDAT…GNPQ). Ca(2+) contacts are provided by Asp405, Asp407, Ser409, Thr411, Glu416, Asp441, Asp443, Asn445, Ser447, Glu452, Asp477, Asp479, Ser481, Tyr483, Glu488, Asp512, Asp514, Asp516, Arg518, and Glu523.

Belongs to the protein kinase superfamily. Ser/Thr protein kinase family. CDPK subfamily.

The protein localises to the cell membrane. It carries out the reaction L-seryl-[protein] + ATP = O-phospho-L-seryl-[protein] + ADP + H(+). The catalysed reaction is L-threonyl-[protein] + ATP = O-phospho-L-threonyl-[protein] + ADP + H(+). Activated by calcium. Autophosphorylation may play an important role in the regulation of the kinase activity. May play a role in signal transduction pathways that involve calcium as a second messenger. This Arabidopsis thaliana (Mouse-ear cress) protein is Calcium-dependent protein kinase 9 (CPK9).